We begin with the raw amino-acid sequence, 223 residues long: MAKAHAFSKKVGWIELITGPMFAGKTAELIRRLHRLEYADVKYLVFKPRIDTRSTQNIKSRTGTSLPSIEVENAPEILSYIMSDNFDNEIKVIGIDEVQFFDDRICEVANILAENGFVVIISGLDKNFKGEPFGPIAKLFAYADKITKLTAICNECGAEATHSLRKIDGKYANYDDEIVKIGCQEFYSAVCRHHHKVPNRPYLNANSEEFIRFFKNKKRNKNV.

Residues 19–26 (GPMFAGKT) and 96–99 (DEVQ) each bind ATP. E97 (proton acceptor) is an active-site residue. Residues C153, C156, C191, and H194 each contribute to the Zn(2+) site.

The protein belongs to the thymidine kinase family. As to quaternary structure, homotetramer.

It is found in the cytoplasm. It catalyses the reaction thymidine + ATP = dTMP + ADP + H(+). This Ureaplasma urealyticum serovar 10 (strain ATCC 33699 / Western) protein is Thymidine kinase.